The chain runs to 177 residues: Endothelin-2 (177 aa).

An N-terminal signal peptide occupies residues 1–23; sequence MPTALCSIALALLVALHEGKSQA. Positions 24–45 are excised as a propeptide; that stretch reads ATTPIPEQPAPLPRARGSHLRT. 2 disulfides stabilise this stretch: cysteine 48/cysteine 62 and cysteine 50/cysteine 58. The propeptide occupies 69–177; that stretch reads VNTPGQTAPY…RPTHSRQRKR (109 aa). The endothelin-like stretch occupies residues 95–110; the sequence is CECYSARDPACATFCH. Residues 155 to 177 are disordered; that stretch reads HFARQQQKPTRETRPTHSRQRKR.

This sequence belongs to the endothelin/sarafotoxin family. As to expression, expressed in various organs including heart, lung, liver, kidney, gastrointestinal tract, uterus and ovary, but not in spleen. Within the gastrointestinal tract, gene expression was detected in rumen, a ruminant-specific digestive organ, as well as stomach, duodenum and colon.

The protein resides in the secreted. In terms of biological role, endothelins are endothelium-derived vasoconstrictor peptides. The chain is Endothelin-2 (EDN2) from Bos taurus (Bovine).